Reading from the N-terminus, the 163-residue chain is uncharacterized protein (163 aa).

2 helical membrane passes run 7–27 (YLNE…CYIV) and 51–71 (LVIF…LVWF).

Its subcellular location is the cell membrane. This is an uncharacterized protein from Rickettsia prowazekii (strain Madrid E).